The following is a 277-amino-acid chain: Inositol monophosphatase 1 (277 aa).

The Mg(2+) site is built by E70, D90, I92, and D93. Residue E70 coordinates substrate. Position 92-95 (I92–T95) interacts with substrate. The residue at position 168 (T168) is a Phosphothreonine. Substrate contacts are provided by residues G194–A196, E213, and D220. D220 lines the Mg(2+) pocket.

It belongs to the inositol monophosphatase superfamily. Homodimer. It depends on Mg(2+) as a cofactor.

It is found in the cytoplasm. The catalysed reaction is a myo-inositol phosphate + H2O = myo-inositol + phosphate. The enzyme catalyses 1D-myo-inositol 1-phosphate + H2O = myo-inositol + phosphate. It carries out the reaction 1D-myo-inositol 2-phosphate + H2O = myo-inositol + phosphate. It catalyses the reaction 1D-myo-inositol 3-phosphate + H2O = myo-inositol + phosphate. The catalysed reaction is 1D-myo-inositol 4-phosphate + H2O = myo-inositol + phosphate. The enzyme catalyses 1D-myo-inositol 5-phosphate + H2O = myo-inositol + phosphate. It carries out the reaction 1D-myo-inositol 6-phosphate + H2O = myo-inositol + phosphate. It catalyses the reaction scyllo-inositol 1-phosphate + H2O = scyllo-inositol + phosphate. The catalysed reaction is alpha-D-galactose 1-phosphate + H2O = D-galactose + phosphate. The enzyme catalyses alpha-D-glucose 1-phosphate + H2O = D-glucose + phosphate. It carries out the reaction D-glucose 6-phosphate + H2O = D-glucose + phosphate. It catalyses the reaction beta-D-fructose 1-phosphate + H2O = D-fructose + phosphate. The catalysed reaction is glycerol 2-phosphate + H2O = glycerol + phosphate. The enzyme catalyses adenosine 2'-phosphate + H2O = adenosine + phosphate. It functions in the pathway polyol metabolism; myo-inositol biosynthesis; myo-inositol from D-glucose 6-phosphate: step 2/2. With respect to regulation, inhibited by Li(+), Ca(2+) and Mn(2+), but also by Mg(2+) at concentrations above 3 mM. Its function is as follows. Phosphatase involved in the dephosphorylation of myo-inositol monophosphate to generate myo-inositol. Is also able to dephosphorylate scyllo-inositol-phosphate, myo-inositol 1,4-diphosphate, scyllo-inositol-1,3-diphosphate and scyllo-inositol-1,4-diphosphate. Also dephosphorylates in vitro other sugar-phosphates including D-galactose-1-phosphate, glucose-1-phosphate, glucose-6-phosphate, fructose-1-phosphate, beta-glycerophosphate and 2'-AMP. Responsible for the provision of inositol required for synthesis of phosphatidylinositol and polyphosphoinositides, and involved in maintaining normal brain function. Has been implicated as the pharmacological target for lithium Li(+) action in brain. The polypeptide is Inositol monophosphatase 1 (IMPA1) (Sus scrofa (Pig)).